The chain runs to 293 residues: Delta(3,5)-Delta(2,4)-dienoyl-CoA isomerase, mitochondrial (293 aa).

Substrate-binding positions include 84 to 88 (AGLNL) and Gly-142.

This sequence belongs to the enoyl-CoA hydratase/isomerase family.

The protein resides in the mitochondrion. It carries out the reaction (3E,5Z)-octadienoyl-CoA = (2E,4E)-octadienoyl-CoA. The enzyme catalyses (3E,5Z,8Z,11Z,14Z)-eicosapentaenoyl-CoA = (2E,4E,8Z,11Z,14Z)-eicosapentaenoyl-CoA. It functions in the pathway lipid metabolism; fatty acid beta-oxidation. Its function is as follows. Isomerization of 3-trans,5-cis-dienoyl-CoA to 2-trans,4-trans-dienoyl-CoA. This chain is Delta(3,5)-Delta(2,4)-dienoyl-CoA isomerase, mitochondrial (ech1), found in Dictyostelium discoideum (Social amoeba).